Consider the following 511-residue polypeptide: Inositol-3-phosphate synthase isozyme 1 (511 aa).

G71, G72, N73, N74, D144, I181, Q191, R194, T231, A232, N233, T234, G282, S283, D307, S310, N341, N342, D343, K356, A394, D395, D423, and S424 together coordinate NAD(+).

It belongs to the myo-inositol 1-phosphate synthase family. As to quaternary structure, homotrimer or homotetramer. Interacts with ATXR5 and ATXR6. The cofactor is NAD(+). In terms of tissue distribution, expressed in siliques, leaves, roots, seed endosperm, but not in embryos. Highest expression in leaves, but restricted to vascular tissue in older leaves.

It localises to the cytoplasm. It is found in the cytosol. The protein localises to the nucleus. The enzyme catalyses D-glucose 6-phosphate = 1D-myo-inositol 3-phosphate. It participates in polyol metabolism; myo-inositol biosynthesis; myo-inositol from D-glucose 6-phosphate: step 1/2. In terms of biological role, key enzyme in myo-inositol biosynthesis pathway that catalyzes the conversion of glucose 6-phosphate to 1-myo-inositol 1-phosphate in a NAD-dependent manner. Catalyzes the majority of myo-inositol synthesis required for plant growth and development. Acts as a repressor of programmed cell death and protects plant cells against cell death under high light intensity or long days. Controls its own transcription by inhibiting ATXR6 activity. Reduces the deposition of inhibitory histone marks on its own promoter. The chain is Inositol-3-phosphate synthase isozyme 1 (IPS1) from Arabidopsis thaliana (Mouse-ear cress).